We begin with the raw amino-acid sequence, 335 residues long: tRNA N6-adenosine threonylcarbamoyltransferase (335 aa).

Fe cation contacts are provided by His-107 and His-111. Substrate contacts are provided by residues 129–133 (LVSGG), Asp-162, Gly-175, and Asn-268. Asp-296 contributes to the Fe cation binding site.

It belongs to the KAE1 / TsaD family. It depends on Fe(2+) as a cofactor.

The protein localises to the cytoplasm. It catalyses the reaction L-threonylcarbamoyladenylate + adenosine(37) in tRNA = N(6)-L-threonylcarbamoyladenosine(37) in tRNA + AMP + H(+). Its function is as follows. Required for the formation of a threonylcarbamoyl group on adenosine at position 37 (t(6)A37) in tRNAs that read codons beginning with adenine. Is involved in the transfer of the threonylcarbamoyl moiety of threonylcarbamoyl-AMP (TC-AMP) to the N6 group of A37, together with TsaE and TsaB. TsaD likely plays a direct catalytic role in this reaction. The protein is tRNA N6-adenosine threonylcarbamoyltransferase of Campylobacter fetus subsp. fetus (strain 82-40).